The following is a 320-amino-acid chain: ADP-L-glycero-D-manno-heptose-6-epimerase (320 aa).

Residues 10–11, 31–32, K38, K53, 75–79, and N92 each bind NADP(+); these read FI, DN, and LGACS. Y139 functions as the Proton acceptor in the catalytic mechanism. Residue K143 participates in NADP(+) binding. N168 contacts substrate. V169 and K177 together coordinate NADP(+). K177 acts as the Proton acceptor in catalysis. Substrate-binding positions include G179, H186, 200 to 203, R213, and Y277; that span reads FEGS.

It belongs to the NAD(P)-dependent epimerase/dehydratase family. HldD subfamily. Homopentamer. NADP(+) is required as a cofactor.

The enzyme catalyses ADP-D-glycero-beta-D-manno-heptose = ADP-L-glycero-beta-D-manno-heptose. It participates in nucleotide-sugar biosynthesis; ADP-L-glycero-beta-D-manno-heptose biosynthesis; ADP-L-glycero-beta-D-manno-heptose from D-glycero-beta-D-manno-heptose 7-phosphate: step 4/4. Its function is as follows. Catalyzes the interconversion between ADP-D-glycero-beta-D-manno-heptose and ADP-L-glycero-beta-D-manno-heptose via an epimerization at carbon 6 of the heptose. The protein is ADP-L-glycero-D-manno-heptose-6-epimerase of Alkalilimnicola ehrlichii (strain ATCC BAA-1101 / DSM 17681 / MLHE-1).